The primary structure comprises 619 residues: Frizzled and smoothened-like protein L (619 aa).

Residues 1-24 (MITNKSKYYFFLILIFINFYLINC) form the signal peptide. Residues asparagine 4, asparagine 63, asparagine 112, asparagine 143, asparagine 159, asparagine 184, and asparagine 203 are each glycosylated (N-linked (GlcNAc...) asparagine). At 25–245 (QEEYPIDQTG…KQWDRLYDLS (221 aa)) the chain is on the extracellular side. Residues 31–169 (DQTGKCEPYI…YSIYDLSLVN (139 aa)) enclose the FZ domain. Cystine bridges form between cysteine 36–cysteine 106 and cysteine 48–cysteine 99. The chain crosses the membrane as a helical span at residues 246 to 266 (NSLSVLSCVGTLFLLFTFNIL). The Cytoplasmic segment spans residues 267-278 (NKKINRFDRMNS). A helical transmembrane segment spans residues 279–299 (LFNGSVFMMSLSGVIILFAGG). The Extracellular portion of the chain corresponds to 300-321 (PRALIKDGGARISVWQDPLCSA). Residues 322-342 (TGFIFQLFSIAAILFWVVMSF) traverse the membrane as a helical segment. The Cytoplasmic segment spans residues 343-358 (ELWYKIKFMTKKLDLK). The helical transmembrane segment at 359–379 (KYYIPFIIIVSLVFSIIPLAT) threads the bilayer. Residues 380-402 (KNYRMIRGNMHCWVHTTKLQNSL) lie on the Extracellular side of the membrane. The helical transmembrane segment at 403–423 (FWIPLGIAITIGTIFIGLVMF) threads the bilayer. Residues 424–444 (EIHRIVSANSKGGVLKLEIKS) lie on the Cytoplasmic side of the membrane. A helical transmembrane segment spans residues 445–465 (ILNVALIYLTFIYLFAFNFYM). Topologically, residues 466-497 (NGQEGVVYGQIESFYQCTLENDASECTIQGPS) are extracellular. The helical transmembrane segment at 498–518 (IGSLGFFIFCIRIYGVYCFIL) threads the bilayer. The Cytoplasmic segment spans residues 519 to 619 (QGLNYRAYNI…TLKDIEVSKS (101 aa)). The disordered stretch occupies residues 581–605 (LNIDSAFSKNNESDDEDDYDPYKKS).

This sequence belongs to the G-protein coupled receptor Fz/Smo family.

Its subcellular location is the membrane. The sequence is that of Frizzled and smoothened-like protein L (fslL) from Dictyostelium discoideum (Social amoeba).